Consider the following 286-residue polypeptide: UPF0725 protein At2g20620 (286 aa).

The tract at residues 1–49 (MVLETPVCSPIDKESSSDDVQLNKPPKKKRKLDVVYPPRDNTSSSSDVK) is disordered.

It belongs to the UPF0725 (EMB2204) family.

The sequence is that of UPF0725 protein At2g20620 from Arabidopsis thaliana (Mouse-ear cress).